We begin with the raw amino-acid sequence, 328 residues long: uncharacterized protein (328 aa).

Residues 37–179 enclose the SIS domain; sequence LTERLLCHQG…AMTVLRCRKI (143 aa). Residue 52 to 57 participates in ATP binding; it reads GIGKSG. CBS domains follow at residues 205 to 264 and 273 to 328; these read LSPR…GGAI and MTRK…AGLL.

It belongs to the SIS family. GutQ/KpsF subfamily.

This is an uncharacterized protein from Chlamydia muridarum (strain MoPn / Nigg).